The sequence spans 363 residues: MIIDTTEVQAINSFSRLESLKEVYGIIWVLIPIFTPVLGITIGVLVIVWLEREISAGIQQRIGPEYAGPLGILQALADGTKLLFKENLLPSRGDTRLFSIGPSIAVISILLSYLVIPFGYRLVLADLSIGVFLWIAISSIAPVGLLMSGYGSNNKYSFLGGLRAAAQSISYEIPLTLCVLSISLLSNSSSTVDIVEAQSKYGFWGWNLWRQPIGFLVFLISSLAECERLPFDLPEAEEELVAGYQTEYSGIKFGLFYVASYLNLLVSSLFVTVLYLGGWNLSIPYIPVPELFDITKRGRVFGTIIGIFITLAKTYLFLFIPIATRWTLPRLRMDQLLNLGWKFLLPISLGNLLLTTSSQLLSL.

6 helical membrane passes run 26–46 (IIWV…GVLV), 98–118 (FSIG…VIPF), 127–147 (LSIG…GLLM), 253–273 (FGLF…FVTV), 300–320 (VFGT…FLFI), and 336–356 (LLNL…LLTT).

It belongs to the complex I subunit 1 family. NDH is composed of at least 16 different subunits, 5 of which are encoded in the nucleus.

The protein localises to the plastid. It is found in the chloroplast thylakoid membrane. The enzyme catalyses a plastoquinone + NADH + (n+1) H(+)(in) = a plastoquinol + NAD(+) + n H(+)(out). It carries out the reaction a plastoquinone + NADPH + (n+1) H(+)(in) = a plastoquinol + NADP(+) + n H(+)(out). NDH shuttles electrons from NAD(P)H:plastoquinone, via FMN and iron-sulfur (Fe-S) centers, to quinones in the photosynthetic chain and possibly in a chloroplast respiratory chain. The immediate electron acceptor for the enzyme in this species is believed to be plastoquinone. Couples the redox reaction to proton translocation, and thus conserves the redox energy in a proton gradient. This is NAD(P)H-quinone oxidoreductase subunit 1, chloroplastic from Helianthus annuus (Common sunflower).